A 220-amino-acid chain; its full sequence is Adenylate kinase (220 aa).

10–15 lines the ATP pocket; the sequence is GAGKGT. The tract at residues 30 to 59 is NMP; that stretch reads STGDMLRAAVKAGTPLGVEAKTYMDEGKLV. AMP is bound by residues threonine 31, arginine 36, 57-59, 85-88, and glutamine 92; these read KLV and GFPR. Positions 122 to 159 are LID; that stretch reads GRRTHPASGRTYHVKFNPPKVEGKDDVTGEPLVQRDDD. Residues arginine 123 and 132 to 133 contribute to the ATP site; that span reads TY. AMP is bound by residues arginine 156 and arginine 167. ATP is bound at residue glycine 206.

This sequence belongs to the adenylate kinase family. In terms of assembly, monomer.

It localises to the cytoplasm. The enzyme catalyses AMP + ATP = 2 ADP. Its pathway is purine metabolism; AMP biosynthesis via salvage pathway; AMP from ADP: step 1/1. Catalyzes the reversible transfer of the terminal phosphate group between ATP and AMP. Plays an important role in cellular energy homeostasis and in adenine nucleotide metabolism. This Burkholderia mallei (strain NCTC 10247) protein is Adenylate kinase.